A 331-amino-acid chain; its full sequence is UDP-galactose/UDP-glucose transporter 3 (331 aa).

8 consecutive transmembrane segments (helical) span residues 11 to 31 (VLLL…QGIL), 49 to 69 (HLAF…YIMI), 80 to 100 (APWW…AMGI), 112 to 132 (VLAK…VYGI), 135 to 155 (TLPE…FALL), 170 to 190 (APLG…TNAT), 206 to 226 (IMLG…FGLP), and 245 to 265 (WDIL…FLTI). A Di-lysine motif motif is present at residues 327-331 (KKKKA).

It belongs to the nucleotide-sugar transporter family. UDP-galactose:UMP antiporter (TC 2.A.7.11) subfamily. Mostly expressed in flowers, and, to a lower extent, in roots, stems and leaves.

It localises to the endoplasmic reticulum membrane. The protein resides in the golgi apparatus membrane. Essential sugar transporter required for the transport of UDP-glucose from the cytoplasm into the Golgi and the endoplasmic reticulum. Essential for pollen development and involved in embryo sac progress. This Arabidopsis thaliana (Mouse-ear cress) protein is UDP-galactose/UDP-glucose transporter 3.